The sequence spans 306 residues: Peroxisome biogenesis factor 10 (306 aa).

The Peroxisomal matrix segment spans residues 1–52; that stretch reads MHLSAHIDPLQIILCTEIDEACIQFIKSQIEGIARACGPRMQANFEGVLIPY. The helical transmembrane segment at 53–84 threads the bilayer; sequence VDVLGKFLYRACCLRYATMGEEAARIVLAKQD. Topologically, residues 85–147 are cytoplasmic; sequence RSKGLVLATT…PEAVISKEKH (63 aa). A helical membrane pass occupies residues 148–174; sequence LVYILNSFKPILLKLVSIIRFLCLTMK. Over 175 to 202 the chain is Peroxisomal matrix; sequence GHCATVSQLLLGLKYISLDEINPEEKKK. Residues 203–219 form a helical membrane-spanning segment; sequence VLTLLLLLGSRLIASIL. Over 220–306 the chain is Cytoplasmic; sequence QHSNSYFDQH…SSPSKIILLR (87 aa). C256, C259, C271, H273, C276, C279, C290, and C293 together coordinate Zn(2+). Residues 256–294 form an RING-type zinc finger; that stretch reads CSLCMEFIHCPAATECGHIFCWSCINGWTSKKSECPLCR.

Belongs to the pex2/pex10/pex12 family. Component of the PEX2-PEX10-PEX12 retrotranslocation channel, composed of PEX2, PEX10 and PEX12.

The protein resides in the peroxisome membrane. It carries out the reaction S-ubiquitinyl-[E2 ubiquitin-conjugating enzyme]-L-cysteine + [acceptor protein]-L-lysine = [E2 ubiquitin-conjugating enzyme]-L-cysteine + N(6)-ubiquitinyl-[acceptor protein]-L-lysine.. It functions in the pathway protein modification; protein ubiquitination. The E3 ubiquitin-protein ligase activity is stimulated by PEX12. Functionally, E3 ubiquitin-protein ligase component of a retrotranslocation channel required for peroxisome organization by mediating export of the PEX5 receptor from peroxisomes to the cytosol, thereby promoting PEX5 recycling. The retrotranslocation channel is composed of PEX2, PEX10 and PEX12; each subunit contributing transmembrane segments that coassemble into an open channel that specifically allows the passage of PEX5 through the peroxisomal membrane. PEX10 also regulates PEX5 recycling by acting as a E3 ubiquitin-protein ligase. When PEX5 recycling is compromised, PEX10 catalyzes polyubiquitination of PEX5 during its passage through the retrotranslocation channel, leading to its degradation. In Schizosaccharomyces pombe (strain 972 / ATCC 24843) (Fission yeast), this protein is Peroxisome biogenesis factor 10 (pas4).